A 305-amino-acid polypeptide reads, in one-letter code: UDP-3-O-acyl-N-acetylglucosamine deacetylase (305 aa).

3 residues coordinate Zn(2+): His79, His238, and Asp242. His265 (proton donor) is an active-site residue.

This sequence belongs to the LpxC family. Requires Zn(2+) as cofactor.

It carries out the reaction a UDP-3-O-[(3R)-3-hydroxyacyl]-N-acetyl-alpha-D-glucosamine + H2O = a UDP-3-O-[(3R)-3-hydroxyacyl]-alpha-D-glucosamine + acetate. The protein operates within glycolipid biosynthesis; lipid IV(A) biosynthesis; lipid IV(A) from (3R)-3-hydroxytetradecanoyl-[acyl-carrier-protein] and UDP-N-acetyl-alpha-D-glucosamine: step 2/6. Functionally, catalyzes the hydrolysis of UDP-3-O-myristoyl-N-acetylglucosamine to form UDP-3-O-myristoylglucosamine and acetate, the committed step in lipid A biosynthesis. The sequence is that of UDP-3-O-acyl-N-acetylglucosamine deacetylase from Shigella dysenteriae serotype 1 (strain Sd197).